Consider the following 323-residue polypeptide: MSDRPTARRWGKCGPLCTRENIMVAFKGVWTQAFWKAVTAEFLAMLIFVLLSLGSTINWGGTEKPLPVDMVLISLCFGLSIATMVQCFGHISGGHINPAVTVAMVCTRKISIAKSVFYIAAQCLGAIIGAGILYLVTPPSVVGGLGVTMVHGNLTAGHGLLVELIITFQLVFTIFASCDSKRTDVTGSIALAIGFSVAIGHLFAINYTGASMNPARSFGPAVIMGNWENHWIYWVGPIIGAVLAGGLYEYVFCPDVEFKRRFKEAFSKAAQQTKGSYMEVEDNRSQVETDDLILKPGVVHVIDVDRGEEKKGKDQSGEVLSSV.

Topologically, residues 1–36 (MSDRPTARRWGKCGPLCTRENIMVAFKGVWTQAFWK) are cytoplasmic. S-palmitoyl cysteine attachment occurs at residues cysteine 13 and cysteine 17. A helical membrane pass occupies residues 37-57 (AVTAEFLAMLIFVLLSLGSTI). At 58–69 (NWGGTEKPLPVD) the chain is on the extracellular side. Residues 70–89 (MVLISLCFGLSIATMVQCFG) form a helical membrane-spanning segment. Over 90 to 93 (HISG) the chain is Cytoplasmic. An intramembrane region (discontinuously helical) is located at residues 94 to 101 (GHINPAVT). The short motif at 97–99 (NPA) is the NPA 1 element. The Cytoplasmic portion of the chain corresponds to 102–115 (VAMVCTRKISIAKS). Serine 111 bears the Phosphoserine; by PKG mark. A helical membrane pass occupies residues 116-136 (VFYIAAQCLGAIIGAGILYLV). The Extracellular portion of the chain corresponds to 137-155 (TPPSVVGGLGVTMVHGNLT). An N-linked (GlcNAc...) asparagine glycan is attached at asparagine 153. Residues 156 to 176 (AGHGLLVELIITFQLVFTIFA) form a helical membrane-spanning segment. The Cytoplasmic segment spans residues 177–184 (SCDSKRTD). Serine 180 bears the Phosphoserine; by PKC mark. A helical membrane pass occupies residues 185-205 (VTGSIALAIGFSVAIGHLFAI). Asparagine 206 carries N-linked (GlcNAc...) asparagine glycosylation. At 206 to 208 (NYT) the chain is on the extracellular side. The discontinuously helical intramembrane region spans 209 to 222 (GASMNPARSFGPAV). An NPA 2 motif is present at residues 213–215 (NPA). Residues 223-231 (IMGNWENHW) lie on the Extracellular side of the membrane. A helical membrane pass occupies residues 232 to 252 (IYWVGPIIGAVLAGGLYEYVF). Topologically, residues 253-323 (CPDVEFKRRF…DQSGEVLSSV (71 aa)) are cytoplasmic. 2 positions are modified to phosphoserine: serine 276 and serine 285. At threonine 289 the chain carries Phosphothreonine. Serine 321 is modified (phosphoserine).

Belongs to the MIP/aquaporin (TC 1.A.8) family. As to quaternary structure, homotetramer. The tetramers can form oligomeric arrays in membranes. The size of the oligomers differs between tissues and is smaller in skeletal muscle than in brain. Interaction between AQP4 oligomeric arrays in close-by cells can contribute to cell-cell adhesion. Part of a complex containing MLC1, TRPV4, HEPACAM and ATP1B1. Post-translationally, phosphorylation by PKC at Ser-180 reduces conductance by 50%. Phosphorylation by PKG at Ser-111 in response to glutamate increases conductance by 40%. Isoform 2: Palmitoylated on its N-terminal region. Isoform 1: Not palmitoylated. As to expression, detected in skeletal muscle. Detected in stomach, along the glandular base region of the fundic gland (at protein level). Detected in brain, lung and skeletal muscle, and at much lower levels in heart and ovary.

The protein localises to the cell membrane. It localises to the basolateral cell membrane. Its subcellular location is the endosome membrane. The protein resides in the sarcolemma. It is found in the cell projection. It carries out the reaction H2O(in) = H2O(out). In terms of biological role, forms a water-specific channel. Plays an important role in brain water homeostasis. It is involved in glymphatic solute transport and is required for a normal rate of water exchange across the blood brain interface. Required for normal levels of cerebrospinal fluid influx into the brain cortex and parenchyma along paravascular spaces that surround penetrating arteries, and for normal drainage of interstitial fluid along paravenous drainage pathways. Thereby, it is required for normal clearance of solutes from the brain interstitial fluid, including soluble beta-amyloid peptides derived from APP. Plays a redundant role in urinary water homeostasis and urinary concentrating ability. This Homo sapiens (Human) protein is Aquaporin-4 (AQP4).